We begin with the raw amino-acid sequence, 305 residues long: MARHFLSLHDYTKEELDRLLALAIELKQEQKQGGEHHLLKGKTLAMIFDKSSTRTRISFEVGIYQLGGHGLFISTGTSQMGRGEPLKDTARVLSRYCDGIMIRTFGQEIVDELAAYATVPVINGLTDLFHPCQIMADVMTVMEHKGGYAGLKFAWVGDGNNMANTWIEAAAIFGFDLALACPQGYEPDAKVMAWAAERAPGRVTLTADPKEAVSGAHVINTDVWASMGMEAEQKVREQAFGGFCLDDALAGLAHPDHIVLHCLPAHRGEEISDSVIEGSNSRVWDEAENRLHAQKAIMATLMGGE.

Carbamoyl phosphate contacts are provided by residues 52-55 (STRT), Q79, R103, and 130-133 (HPCQ). L-ornithine contacts are provided by residues N161, D222, and 226 to 227 (SM). Carbamoyl phosphate-binding positions include 262–263 (CL) and R290.

The protein belongs to the aspartate/ornithine carbamoyltransferase superfamily. OTCase family.

The protein resides in the cytoplasm. It carries out the reaction carbamoyl phosphate + L-ornithine = L-citrulline + phosphate + H(+). It functions in the pathway amino-acid biosynthesis; L-arginine biosynthesis; L-arginine from L-ornithine and carbamoyl phosphate: step 1/3. Functionally, reversibly catalyzes the transfer of the carbamoyl group from carbamoyl phosphate (CP) to the N(epsilon) atom of ornithine (ORN) to produce L-citrulline. The protein is Ornithine carbamoyltransferase of Pelobacter propionicus (strain DSM 2379 / NBRC 103807 / OttBd1).